Consider the following 303-residue polypeptide: uncharacterized protein (303 aa).

An S4 RNA-binding domain is found at 15–74; that stretch reads ERIDKFLASTENDWSRTQVQQWVKDGQVVVNGSAVKANYKIQPGDQVTVTVPEPEALDVL. D138 is an active-site residue.

It belongs to the pseudouridine synthase RluA family.

The enzyme catalyses a uridine in RNA = a pseudouridine in RNA. This is an uncharacterized protein from Bacillus subtilis (strain 168).